The primary structure comprises 334 residues: Glyceraldehyde-3-phosphate dehydrogenase (334 aa).

NAD(+)-binding positions include 11-12 (RI), aspartate 33, and serine 119. D-glyceraldehyde 3-phosphate contacts are provided by residues 149 to 151 (SCT) and threonine 180. The active-site Nucleophile is cysteine 150. Asparagine 181 provides a ligand contact to NAD(+). Residues arginine 197, 210-211 (TG), and arginine 233 contribute to the D-glyceraldehyde 3-phosphate site. Asparagine 314 serves as a coordination point for NAD(+).

Belongs to the glyceraldehyde-3-phosphate dehydrogenase family. Homotetramer.

The protein localises to the cytoplasm. The enzyme catalyses D-glyceraldehyde 3-phosphate + phosphate + NAD(+) = (2R)-3-phospho-glyceroyl phosphate + NADH + H(+). Its pathway is carbohydrate degradation; glycolysis; pyruvate from D-glyceraldehyde 3-phosphate: step 1/5. Catalyzes the oxidative phosphorylation of glyceraldehyde 3-phosphate (G3P) to 1,3-bisphosphoglycerate (BPG) using the cofactor NAD. The first reaction step involves the formation of a hemiacetal intermediate between G3P and a cysteine residue, and this hemiacetal intermediate is then oxidized to a thioester, with concomitant reduction of NAD to NADH. The reduced NADH is then exchanged with the second NAD, and the thioester is attacked by a nucleophilic inorganic phosphate to produce BPG. This Clostridium acetobutylicum (strain ATCC 824 / DSM 792 / JCM 1419 / IAM 19013 / LMG 5710 / NBRC 13948 / NRRL B-527 / VKM B-1787 / 2291 / W) protein is Glyceraldehyde-3-phosphate dehydrogenase (gap).